Here is a 2477-residue protein sequence, read N- to C-terminus: Spectrin alpha chain, non-erythrocytic 1 (2477 aa).

The N-terminal domain stretch occupies residues 1–14; it reads MDPSGVKVLETAED. 10 Spectrin repeats span residues 45-146, 150-251, 256-358, 361-465, 468-570, 574-676, 679-781, 785-888, 891-969, and 1096-1162; these read RFQF…VKLL, KLVQ…QGKL, EVQR…ARLN, YRLQ…QYEQ, DLQL…AQLA, HLQQ…KLRE, QQQQ…QKLA, RLQQ…DLED, QAQQ…ETGK, and LFRE…SEGL. The SH3 domain occupies 967–1026; that stretch reads TGKELVLALYDYQEKSPREVTMKKGDILTLLNSTNKDWWKVEVNDRQGFVPAAYVKKLDP. Tyr1176 carries the phosphotyrosine modification. 10 Spectrin repeats span residues 1234 to 1336, 1339 to 1442, 1446 to 1549, 1552 to 1661, 1664 to 1767, 1769 to 1873, 1876 to 1979, 1983 to 2086, 2097 to 2199, and 2211 to 2315; these read EVQR…EKLG, HDLQ…MMLD, ELQL…KLGE, TLQQ…KLKE, KQQN…KLNE, HRLH…RLEE, EYQQ…KLDE, FLQF…KLLE, LFLT…LELQ, and LRQE…NLEQ. The interval 2257–2477 is C-terminal domain; sequence HQEIRAMRSQ…IEFTRSLFVN (221 aa). EF-hand domains follow at residues 2328–2363, 2371–2406, and 2409–2444; these read EALKEFSMMFKHFDKDKSGRLNHQEFKSCLRSLGYD, EPDPEFESILDTVDPNRDGHVSLQEYMAFMISRETE, and KSSEEIESAFRALSSERKPYVTKEELYQNLTREQAD. Asp2341, Asp2343, Ser2345, Arg2347, Glu2352, Asp2384, Asn2386, Asp2388, His2390, and Glu2395 together coordinate Ca(2+).

Belongs to the spectrin family. As to quaternary structure, like erythrocyte spectrin, the spectrin-like proteins are capable of forming dimers which can further associate to tetramers. Interacts with ACP1. Phosphorylation of Tyr-1176 decreases sensitivity to cleavage by calpain in vitro.

The protein resides in the cytoplasm. Its subcellular location is the cytoskeleton. It localises to the cell cortex. Its function is as follows. Morphologically, spectrin-like proteins appear to be related to spectrin, showing a flexible rod-like structure. They can bind actin but seem to differ in their calmodulin-binding activity. In nonerythroid tissues, spectrins, in association with some other proteins, may play an important role in membrane organization. The sequence is that of Spectrin alpha chain, non-erythrocytic 1 (SPTAN1) from Gallus gallus (Chicken).